The primary structure comprises 474 residues: Cysteine--tRNA ligase (474 aa).

C28 serves as a coordination point for Zn(2+). Positions 30–40 (ITVYDLCHLGH) match the 'HIGH' region motif. Residues C209, H234, and E238 each coordinate Zn(2+). The 'KMSKS' region signature appears at 269–273 (KMSKS). K272 provides a ligand contact to ATP.

The protein belongs to the class-I aminoacyl-tRNA synthetase family. Monomer. Zn(2+) serves as cofactor.

The protein localises to the cytoplasm. It carries out the reaction tRNA(Cys) + L-cysteine + ATP = L-cysteinyl-tRNA(Cys) + AMP + diphosphate. The sequence is that of Cysteine--tRNA ligase from Blochmanniella floridana.